Here is a 68-residue protein sequence, read N- to C-terminus: Prokaryotic ubiquitin-like protein Pup (68 aa).

A disordered region spans residues 1–37 (MAQERIFGTGSRREDEPDTPAPVDPPVSGAAQAQRDM). Positions 24 to 62 (DPPVSGAAQAQRDMQGTDDLLAEIDGVLETNAEAFVKGF) are ARC ATPase binding. Deamidated glutamine is present on Q68. An Isoglutamyl lysine isopeptide (Gln-Lys) (interchain with K-? in acceptor proteins) cross-link involves residue Q68.

Belongs to the prokaryotic ubiquitin-like protein family. In terms of assembly, strongly interacts with the proteasome-associated ATPase ARC through a hydrophobic interface; the interacting region of Pup lies in its C-terminal half. There is one Pup binding site per ARC hexamer ring. Post-translationally, is modified by deamidation of its C-terminal glutamine to glutamate by the deamidase Dop, a prerequisite to the subsequent pupylation process.

The protein operates within protein degradation; proteasomal Pup-dependent pathway. In terms of biological role, protein modifier that is covalently attached to lysine residues of substrate proteins, thereby targeting them for proteasomal degradation. The tagging system is termed pupylation. The polypeptide is Prokaryotic ubiquitin-like protein Pup (Kocuria rhizophila (strain ATCC 9341 / DSM 348 / NBRC 103217 / DC2201)).